The sequence spans 84 residues: MSILSFLLGEKKKSASVAKERLQLIIAHERVGGRPPADYLPALQKELVAVISKYVRISNDDIRVSLERQDDLEVLEVKIEIPQA.

This sequence belongs to the MinE family.

In terms of biological role, prevents the cell division inhibition by proteins MinC and MinD at internal division sites while permitting inhibition at polar sites. This ensures cell division at the proper site by restricting the formation of a division septum at the midpoint of the long axis of the cell. In Burkholderia ambifaria (strain MC40-6), this protein is Cell division topological specificity factor.